Here is a 306-residue protein sequence, read N- to C-terminus: MISDSIPKELILEIMLRLPAKSIARFHCVSKQWASMLSRPYFTELFLTSSSTQPRLLFAIKRNGLWCFFSLPKHQSPYDNSSSSLVVAADFHMKFLPNKIQMYSSSENRKLSCCYASGLTYFYDMYSEVRVICNPITGRYASLPYLKRYRKELSFFGFDPIDKQFKEWLKYAYSLRDDKFFTHDVFVVRVTATEMNTIQRVEIQGFGECQHEYDYYRSRVVYVFADHVEDLDVNDPKLLESKEEEEEEEEEEEEEEEEEEEEEEEEEEEESKEREKEKKIETVIGGWIKQYWACFLRKSWELNPHR.

The F-box domain maps to 1–45; sequence MISDSIPKELILEIMLRLPAKSIARFHCVSKQWASMLSRPYFTEL. The disordered stretch occupies residues 235–278; the sequence is DPKLLESKEEEEEEEEEEEEEEEEEEEEEEEEEEEESKEREKEK. The segment covering 242–270 has biased composition (acidic residues); that stretch reads KEEEEEEEEEEEEEEEEEEEEEEEEEEEE.

The chain is Putative F-box protein At1g47300 from Arabidopsis thaliana (Mouse-ear cress).